The sequence spans 357 residues: Peptide chain release factor 1 (357 aa).

Gln-234 carries the post-translational modification N5-methylglutamine. The tract at residues 249 to 308 (PSGVEVSCQDEKSQHKNRSKAMRVLRSRVYEKKREEQQAEREEARRSMVGSGDRSAKIRT) is disordered. Residues 263–274 (HKNRSKAMRVLR) show a composition bias toward basic residues. The segment covering 276-294 (RVYEKKREEQQAEREEARR) has biased composition (basic and acidic residues).

Belongs to the prokaryotic/mitochondrial release factor family. Post-translationally, methylated by PrmC. Methylation increases the termination efficiency of RF1.

Its subcellular location is the cytoplasm. Functionally, peptide chain release factor 1 directs the termination of translation in response to the peptide chain termination codons UAG and UAA. This is Peptide chain release factor 1 from Salinibacter ruber (strain DSM 13855 / M31).